The primary structure comprises 426 residues: Serine hydroxymethyltransferase (426 aa).

(6S)-5,6,7,8-tetrahydrofolate is bound by residues Leu-122 and 126-128 (GHL). Lys-231 carries the N6-(pyridoxal phosphate)lysine modification.

This sequence belongs to the SHMT family. In terms of assembly, homodimer. Pyridoxal 5'-phosphate is required as a cofactor.

Its subcellular location is the cytoplasm. The enzyme catalyses (6R)-5,10-methylene-5,6,7,8-tetrahydrofolate + glycine + H2O = (6S)-5,6,7,8-tetrahydrofolate + L-serine. It participates in one-carbon metabolism; tetrahydrofolate interconversion. It functions in the pathway amino-acid biosynthesis; glycine biosynthesis; glycine from L-serine: step 1/1. In terms of biological role, catalyzes the reversible interconversion of serine and glycine with tetrahydrofolate (THF) serving as the one-carbon carrier. This reaction serves as the major source of one-carbon groups required for the biosynthesis of purines, thymidylate, methionine, and other important biomolecules. Also exhibits THF-independent aldolase activity toward beta-hydroxyamino acids, producing glycine and aldehydes, via a retro-aldol mechanism. This Koribacter versatilis (strain Ellin345) protein is Serine hydroxymethyltransferase.